The sequence spans 226 residues: Ribonuclease 3 (226 aa).

In terms of domain architecture, RNase III spans Leu-7 to Asp-129. Position 42 (Glu-42) interacts with Mg(2+). Asp-46 is an active-site residue. The Mg(2+) site is built by Asp-115 and Glu-118. Residue Glu-118 is part of the active site. The 71-residue stretch at Asp-156–Lys-226 folds into the DRBM domain.

This sequence belongs to the ribonuclease III family. As to quaternary structure, homodimer. The cofactor is Mg(2+).

The protein localises to the cytoplasm. The enzyme catalyses Endonucleolytic cleavage to 5'-phosphomonoester.. In terms of biological role, digests double-stranded RNA. Involved in the processing of primary rRNA transcript to yield the immediate precursors to the large and small rRNAs (23S and 16S). Processes some mRNAs, and tRNAs when they are encoded in the rRNA operon. Processes pre-crRNA and tracrRNA of type II CRISPR loci if present in the organism. The polypeptide is Ribonuclease 3 (Shewanella sp. (strain W3-18-1)).